A 374-amino-acid chain; its full sequence is TTIILLIAFAAIQLSKADDLKFVFVMARGGDFVAGDYAGGPKIINKEAKDSELTEQGKQEAFQLGTKLSELYKTKLGVSKWDSKTTYWPVALSQKRTQVSTLITGAGLEGDQSKRNKAWTNEELKATSFPAMESFSRFIKPNECPKYLEELMKQKQEISTILKECSSSVQQVKSKYSAVNVNLPQHIWLAYETLKKLKRQQPSSSTWMTDDLMKNLRECSAKITWLATTKTDTLRKLSGGLLLNDLFNDMDQITQGKAQPNAPGGKDSKLNVFTVSQFLVISQLAAFMPEGSKLNNKAVTASDIYPEDGSHVDIEMYQENNKWSVKLVYVSGKDKQPQTITLPGCQEKCPYEQFKSALQKYKITDEEHQKACKN.

Residues 1–17 (TTIILLIAFAAIQLSKA) form the signal peptide. Residue V25 coordinates serotonin. Cystine bridges form between C144-C372, C165-C219, and C345-C349. Serotonin is bound by residues D245, D249, N271, and Q283.

It belongs to the histidine acid phosphatase family.

The protein localises to the secreted. In terms of biological role, probably modulates blood feeding of fleas on vertebrate species by binding and sequestering different mediators involved in the host response. Binds biogenic amines: serotonin, adrenaline and noradrenaline. Binds leukotriene C4. Does not bind histamine, leukotriene B4, leukotriene D4, leukotriene E4, ADP, and stable analogs of thromboxane A2: U-46619 and cTXA2. The polypeptide is Acid phosphatase-like protein XcAP-1 (Xenopsylla cheopis (Oriental rat flea)).